Here is a 308-residue protein sequence, read N- to C-terminus: Prephenate dehydratase (308 aa).

The 185-residue stretch at 3-187 (RITYLGPEGT…AHTRFVLVGR (185 aa)) folds into the Prephenate dehydratase domain. An ACT domain is found at 201 to 278 (SVVLGLGNVP…EDVRYLGSWP (78 aa)).

Homodimer.

The catalysed reaction is prephenate + H(+) = 3-phenylpyruvate + CO2 + H2O. It functions in the pathway amino-acid biosynthesis; L-phenylalanine biosynthesis; phenylpyruvate from prephenate: step 1/1. This chain is Prephenate dehydratase (pheA), found in Mycobacteroides abscessus (strain ATCC 19977 / DSM 44196 / CCUG 20993 / CIP 104536 / JCM 13569 / NCTC 13031 / TMC 1543 / L948) (Mycobacterium abscessus).